We begin with the raw amino-acid sequence, 316 residues long: Protein C4 (316 aa).

It belongs to the poxviridae OPG031 protein family.

The protein localises to the host cytoplasm. It is found in the host nucleus. Plays a role in the inhibition of host NF-kappa-B activation. Mechanistically, blocks the subunit p65/RELA translocation into the host nucleus. This is Protein C4 (OPG031) from Homo sapiens (Human).